Consider the following 392-residue polypeptide: Protein SRL2 (392 aa).

S11 bears the Phosphoserine mark. A disordered region spans residues 18-52; that stretch reads KPSETPKMEEEKLEVTNVNASSSKKVHKSKKSTSK. Over residues 21 to 31 the composition is skewed to basic and acidic residues; the sequence is ETPKMEEEKLE. Positions 41-50 are enriched in basic residues; the sequence is KKVHKSKKST. At S139 the chain carries Phosphoserine. The segment at 284 to 303 is disordered; that stretch reads EDSTAVTNENGHISSEKNLK. The span at 287–296 shows a compositional bias: polar residues; the sequence is TAVTNENGHI.

Its subcellular location is the cytoplasm. The protein resides in the nucleus. In Saccharomyces cerevisiae (strain ATCC 204508 / S288c) (Baker's yeast), this protein is Protein SRL2 (SRL2).